The sequence spans 119 residues: Large ribosomal subunit protein uL18 (119 aa).

The protein belongs to the universal ribosomal protein uL18 family. Part of the 50S ribosomal subunit; part of the 5S rRNA/L5/L18/L25 subcomplex. Contacts the 5S and 23S rRNAs.

This is one of the proteins that bind and probably mediate the attachment of the 5S RNA into the large ribosomal subunit, where it forms part of the central protuberance. In Lactobacillus johnsonii (strain CNCM I-12250 / La1 / NCC 533), this protein is Large ribosomal subunit protein uL18.